A 143-amino-acid chain; its full sequence is Hemoglobin subunit alpha-1 (143 aa).

Position 2 is an N-acetylserine (Ser2). Residues 2-143 enclose the Globin domain; sequence SLSTKDKETV…VSLALAEKYR (142 aa). His60 contacts O2. Heme b is bound at residue His89.

Belongs to the globin family. In terms of assembly, hb1 is a heterotetramer of two alpha-1 chains and two beta-1 chains. In terms of tissue distribution, red blood cells.

Functionally, involved in oxygen transport from gills to the various peripheral tissues. The polypeptide is Hemoglobin subunit alpha-1 (Liparis tunicatus (Kelp snailfish)).